Consider the following 556-residue polypeptide: Urocanate hydratase (556 aa).

NAD(+)-binding positions include 52–53 (GG), Gln130, 176–178 (GMG), Glu196, Arg201, 242–243 (NA), 263–267 (QTSAH), 273–274 (YL), and Tyr322. Residue Cys410 is part of the active site. Residue Gly492 coordinates NAD(+).

Belongs to the urocanase family. NAD(+) is required as a cofactor.

The protein resides in the cytoplasm. The enzyme catalyses 4-imidazolone-5-propanoate = trans-urocanate + H2O. The protein operates within amino-acid degradation; L-histidine degradation into L-glutamate; N-formimidoyl-L-glutamate from L-histidine: step 2/3. Catalyzes the conversion of urocanate to 4-imidazolone-5-propionate. The protein is Urocanate hydratase of Shewanella sediminis (strain HAW-EB3).